A 363-amino-acid polypeptide reads, in one-letter code: dTDP-L-rhamnose 4-epimerase (363 aa).

Residues 18–24 (GGAGFIG), 68–69 (DV), and 90–94 (LAAET) each bind NAD(+). Ser136 and Tyr191 together coordinate substrate. Positions 191 and 195 each coordinate NAD(+). The Proton acceptor role is filled by Tyr191. Asn220 and Arg259 together coordinate substrate.

Belongs to the NAD(P)-dependent epimerase/dehydratase family. It depends on NAD(+) as a cofactor.

The catalysed reaction is dTDP-6-deoxy-beta-L-talose = dTDP-beta-L-rhamnose. The protein operates within bacterial outer membrane biogenesis; LPS O-antigen biosynthesis. Catalyzes the interconvertion of dTDP-6-deoxy-L-talose and dTDP-L-rhamnose. The equilibrium is strongly toward dTDP-L-rhamnose. The polypeptide is dTDP-L-rhamnose 4-epimerase (wbiB) (Burkholderia thailandensis (strain ATCC 700388 / DSM 13276 / CCUG 48851 / CIP 106301 / E264)).